Here is a 470-residue protein sequence, read N- to C-terminus: 6-phospho-beta-galactosidase 1 (470 aa).

D-galactose 6-phosphate-binding residues include Gln23, His120, Asn163, Glu164, and Asn300. Glu164 (proton donor) is an active-site residue. Residue Glu378 is the Nucleophile of the active site. Residues Ser434, Trp435, Lys441, and Tyr443 each contribute to the D-galactose 6-phosphate site.

Belongs to the glycosyl hydrolase 1 family.

It carries out the reaction a 6-phospho-beta-D-galactoside + H2O = D-galactose 6-phosphate + an alcohol. Its pathway is carbohydrate metabolism; lactose degradation; D-galactose 6-phosphate and beta-D-glucose from lactose 6-phosphate: step 1/1. This chain is 6-phospho-beta-galactosidase 1, found in Streptococcus pneumoniae (strain ATCC BAA-255 / R6).